Consider the following 371-residue polypeptide: Interstrand DNA cross-link repair glycosylase (371 aa).

A QXQ; important for activity motif is present at residues 37–39; the sequence is QAQ.

The protein belongs to the DNA glycosylase AlkZ-like family.

DNA glycosylase involved in the repair of interstrand DNA cross-links (ICLs), which are highly toxic DNA lesions that covalently tether the opposing strands of DNA, thereby inhibiting essential cellular processes such as DNA replication and transcription. Acts by unhooking both sides of the ICLs, forming abasic (AP) sites on both strands. AlkZ specifically repairs DNA damage induced by azinomycin B (AZB), a natural product with potent antibiotic and antitumor activities that interacts covalently with duplex DNA and forms ICLs. AlkZ thus confers self-resistance to azinomycin B, which is produced by S.sahachiroi. It may also protect target sites by protein-DNA interaction. Binds sequence non-specifically to native DNA and structure-specifically to azinomycin B-modified sites, with higher affinity to azinomycin B-modified sites and lower affinity to native DNA duplex. In vitro, also acts on monoadducts and can catalyze the excision of N7-methylguanine (7mGua) from an oligonucleotide containing N7-methyldeoxyguanosine (d7mG). Is a monofunctional DNA glycosylase that does not have lyase activity. The protein is Interstrand DNA cross-link repair glycosylase of Streptomyces sahachiroi.